The following is a 220-amino-acid chain: MNISPYRTRIKFCGMTRVGDVRLASELGVDAVGLIFASGSSRLLTVSAACAIRRTVAPMVNVVALFQNNSADEIHTVVRTVRPTLLQFHGEEEDAFCRTFNVPYLKAIPMAGAEAKRICTRTLYLKYPNAAGFIFDSHLKGGTGQTFDWSRLPIDLQHPFLLAGGITPENVFDAIAATVPWGVDVSSGIELQPGIKDGDKMRQFVEEVRRADGRRLFGVA.

This sequence belongs to the TrpF family.

The catalysed reaction is N-(5-phospho-beta-D-ribosyl)anthranilate = 1-(2-carboxyphenylamino)-1-deoxy-D-ribulose 5-phosphate. The protein operates within amino-acid biosynthesis; L-tryptophan biosynthesis; L-tryptophan from chorismate: step 3/5. The sequence is that of N-(5'-phosphoribosyl)anthranilate isomerase from Xylella fastidiosa (strain 9a5c).